Reading from the N-terminus, the 84-residue chain is UPF0297 protein NT01CX_2279 (84 aa).

It belongs to the UPF0297 family.

The polypeptide is UPF0297 protein NT01CX_2279 (Clostridium novyi (strain NT)).